We begin with the raw amino-acid sequence, 525 residues long: Protein disulfide-isomerase A2 (525 aa).

The signal sequence occupies residues 1–21 (MSCQLLPVLLLLLLRASCPWG). The region spanning 27 to 152 (RSPSEEPPEE…IAEWLRRRVG (126 aa)) is the Thioredoxin 1 domain. Catalysis depends on nucleophile residues Cys-71 and Cys-74. Cys-71 and Cys-74 form a disulfide bridge. 2 N-linked (GlcNAc...) asparagine glycosylation sites follow: Asn-127 and Asn-284. The Thioredoxin 2 domain occupies 367–496 (VLNGQVKPYL…FSKFLDNGGV (130 aa)). Residues Cys-418 and Cys-421 each act as nucleophile in the active site. Cys-418 and Cys-421 form a disulfide bridge. Positions 498–525 (PTEEPLEEPAAPFPEPPANSTMGSKEEL) are disordered. N-linked (GlcNAc...) asparagine glycosylation occurs at Asn-516. Residues 516-525 (NSTMGSKEEL) are compositionally biased toward polar residues. Positions 522 to 525 (KEEL) match the Prevents secretion from ER motif.

The protein belongs to the protein disulfide isomerase family. As to quaternary structure, monomer; predominantly as monomer under reducing conditions. Homodimer; disulfide-linked. Part of a large chaperone multiprotein complex comprising DNAJB11, HSP90B1, HSPA5, HYOU, PDIA2, PDIA4, PDIA6, PPIB, SDF2L1, UGGT1 and very small amounts of ERP29, but not, or at very low levels, CALR nor CANX. In terms of processing, the disulfide-linked homodimer exhibits an enhanced chaperone activity. Post-translationally, glycosylated.

It localises to the endoplasmic reticulum lumen. It carries out the reaction Catalyzes the rearrangement of -S-S- bonds in proteins.. In terms of biological role, acts as an intracellular estrogen-binding protein. May be involved in modulating cellular levels and biological functions of estrogens in the pancreas. May act as a chaperone that inhibits aggregation of misfolded proteins. The protein is Protein disulfide-isomerase A2 (PDIA2) of Pongo abelii (Sumatran orangutan).